The sequence spans 153 residues: Putative ubiquitin-conjugating enzyme E2 N-like (153 aa).

The 148-residue stretch at 3-150 folds into the UBC core domain; the sequence is ELPHRIIKET…ARAWTRLYAM (148 aa). Lysine 83 carries the N6-acetyllysine modification.

Belongs to the ubiquitin-conjugating enzyme family. In terms of tissue distribution, expressed in epididymis (at protein level).

The polypeptide is Putative ubiquitin-conjugating enzyme E2 N-like (UBE2NL) (Homo sapiens (Human)).